The sequence spans 371 residues: MSL complex subunit 3B (371 aa).

Disordered stretches follow at residues Met-1–Ala-47 and Glu-160–Lys-230. Over residues Pro-8–Ala-47 the composition is skewed to basic and acidic residues. Residues Asp-44–Pro-367 form the MRG domain. Residues Ser-183 to Ala-193 are compositionally biased toward low complexity. Positions Ala-206 to His-216 are enriched in basic residues.

The protein resides in the nucleus. Its function is as follows. Probable non-catalytic component of the MSL histone acetyltransferase complex, a multiprotein complex that mediates the majority of histone H4 acetylation at 'Lys-16' (H4K16ac), an epigenetic mark that prevents chromatin compaction. This Mus musculus (Mouse) protein is MSL complex subunit 3B.